The primary structure comprises 451 residues: UDP-N-acetylmuramoylalanine--D-glutamate ligase (451 aa).

118 to 124 (GSNGKTT) lines the ATP pocket.

It belongs to the MurCDEF family.

The protein resides in the cytoplasm. The enzyme catalyses UDP-N-acetyl-alpha-D-muramoyl-L-alanine + D-glutamate + ATP = UDP-N-acetyl-alpha-D-muramoyl-L-alanyl-D-glutamate + ADP + phosphate + H(+). The protein operates within cell wall biogenesis; peptidoglycan biosynthesis. In terms of biological role, cell wall formation. Catalyzes the addition of glutamate to the nucleotide precursor UDP-N-acetylmuramoyl-L-alanine (UMA). This Shouchella clausii (strain KSM-K16) (Alkalihalobacillus clausii) protein is UDP-N-acetylmuramoylalanine--D-glutamate ligase.